We begin with the raw amino-acid sequence, 211 residues long: ATP phosphoribosyltransferase (211 aa).

Belongs to the ATP phosphoribosyltransferase family. Short subfamily. Heteromultimer composed of HisG and HisZ subunits.

It localises to the cytoplasm. It carries out the reaction 1-(5-phospho-beta-D-ribosyl)-ATP + diphosphate = 5-phospho-alpha-D-ribose 1-diphosphate + ATP. Its pathway is amino-acid biosynthesis; L-histidine biosynthesis; L-histidine from 5-phospho-alpha-D-ribose 1-diphosphate: step 1/9. Its function is as follows. Catalyzes the condensation of ATP and 5-phosphoribose 1-diphosphate to form N'-(5'-phosphoribosyl)-ATP (PR-ATP). Has a crucial role in the pathway because the rate of histidine biosynthesis seems to be controlled primarily by regulation of HisG enzymatic activity. This chain is ATP phosphoribosyltransferase, found in Pseudomonas savastanoi pv. phaseolicola (strain 1448A / Race 6) (Pseudomonas syringae pv. phaseolicola (strain 1448A / Race 6)).